A 576-amino-acid polypeptide reads, in one-letter code: Lysine--tRNA ligase (576 aa).

Glu412 and Glu419 together coordinate Mg(2+).

Belongs to the class-II aminoacyl-tRNA synthetase family. Homodimer. Mg(2+) is required as a cofactor.

Its subcellular location is the cytoplasm. The catalysed reaction is tRNA(Lys) + L-lysine + ATP = L-lysyl-tRNA(Lys) + AMP + diphosphate. In Phocaeicola vulgatus (strain ATCC 8482 / DSM 1447 / JCM 5826 / CCUG 4940 / NBRC 14291 / NCTC 11154) (Bacteroides vulgatus), this protein is Lysine--tRNA ligase.